The following is a 183-amino-acid chain: Apo-citrate lyase phosphoribosyl-dephospho-CoA transferase (183 aa).

It belongs to the CitX family.

The catalysed reaction is apo-[citrate lyase ACP] + 2'-(5''-triphospho-alpha-D-ribosyl)-3'-dephospho-CoA = holo-[citrate lyase ACP] + diphosphate. Its function is as follows. Transfers 2-(5''-triphosphoribosyl)-3'-dephosphocoenzyme-A on a serine residue to the apo-acyl carrier protein (gamma chain) of the citrate lyase to yield holo-acyl carrier protein. This is Apo-citrate lyase phosphoribosyl-dephospho-CoA transferase from Shigella flexneri serotype 5b (strain 8401).